Here is a 279-residue protein sequence, read N- to C-terminus: Elongation factor Ts (279 aa).

The interval Thr79–Val82 is involved in Mg(2+) ion dislocation from EF-Tu.

Belongs to the EF-Ts family.

It localises to the cytoplasm. In terms of biological role, associates with the EF-Tu.GDP complex and induces the exchange of GDP to GTP. It remains bound to the aminoacyl-tRNA.EF-Tu.GTP complex up to the GTP hydrolysis stage on the ribosome. This is Elongation factor Ts from Phytoplasma mali (strain AT).